The primary structure comprises 398 residues: Stomatin-like protein 1 (398 aa).

The Tyrosine-type lysosomal sorting signal motif lies at 6–10; the sequence is GYRAL. At Ser-28 the chain carries Phosphoserine. Residues 58-78 form a helical; Signal-anchor for type III membrane protein membrane-spanning segment; sequence LISFLGFLLLLVTFPISGWFA. Residues 79-398 lie on the Cytoplasmic side of the membrane; the sequence is LKIVPTYERM…KLEAVLRALK (320 aa). The region spanning 287–398 is the SCP2 domain; that stretch reads KQPLAEGLLT…KLEAVLRALK (112 aa).

It belongs to the band 7/mec-2 family. In terms of assembly, interacts with STOM; may redistribute STOM from the plasma membrane to late endosomes. Interacts with FBXW7 isoform 3 and CDK2. In terms of tissue distribution, ubiquitously expressed at low levels. Expression is highest in brain.

It localises to the membrane. It is found in the late endosome membrane. Its subcellular location is the membrane raft. The protein resides in the cell membrane. The protein localises to the cytoplasmic vesicle. Functionally, may play a role in cholesterol transfer to late endosomes. May play a role in modulating membrane acid-sensing ion channels. Can specifically inhibit proton-gated current of ASIC1 isoform 1. Can increase inactivation speed of ASIC3. May be involved in regulation of proton sensing in dorsal root ganglions. May play a role in protecting FBXW7 isoform 3 from degradation. The polypeptide is Stomatin-like protein 1 (STOML1) (Homo sapiens (Human)).